We begin with the raw amino-acid sequence, 562 residues long: Catalase T (562 aa).

Residues H64 and N137 contribute to the active site. Position 351 (Y351) interacts with heme.

Belongs to the catalase family. In terms of assembly, homotetramer. The cofactor is heme.

The protein resides in the cytoplasm. The enzyme catalyses 2 H2O2 = O2 + 2 H2O. Functionally, occurs in almost all aerobically respiring organisms and serves to protect cells from the toxic effects of hydrogen peroxide. The sequence is that of Catalase T (CTT1) from Saccharomyces cerevisiae (strain ATCC 204508 / S288c) (Baker's yeast).